A 249-amino-acid polypeptide reads, in one-letter code: Derlin-2.1 (249 aa).

At 1–21 (MAQAVEEWYRQMPIITRSYLT) the chain is on the cytoplasmic side. Residues 22–42 (AAVVTTVGCTLEIISPYHLYL) form a helical membrane-spanning segment. Residues 43–96 (NPKLVVQHYEIWRLVTNFLYFRKMDLDFLFHMFFLARYCKLLEENSFRGRTADF) are Lumenal-facing. A helical transmembrane segment spans residues 97–117 (FYMLLFGATVLTSIVLIGGMI). At 118–122 (PYISE) the chain is on the cytoplasmic side. Residues 123-143 (TFARILFLSNSLTFMMVYVWS) traverse the membrane as a helical segment. At 144–152 (KHNPFIHMS) the chain is on the lumenal side. A helical transmembrane segment spans residues 153–173 (FLGLFTFTAAYLPWVLLGFSI). The Cytoplasmic portion of the chain corresponds to 174-249 (LVGSSTWVDL…GAMGLDPQAQ (76 aa)).

The protein belongs to the derlin family. In terms of tissue distribution, expressed in roots, stalks, leaves, embryo and endosperm.

Its subcellular location is the endoplasmic reticulum membrane. Its function is as follows. May be involved in the degradation process of specific misfolded endoplasmic reticulum (ER) luminal proteins. The chain is Derlin-2.1 (DER2.1) from Zea mays (Maize).